The sequence spans 117 residues: Large ribosomal subunit protein bL20 (117 aa).

This sequence belongs to the bacterial ribosomal protein bL20 family.

Functionally, binds directly to 23S ribosomal RNA and is necessary for the in vitro assembly process of the 50S ribosomal subunit. It is not involved in the protein synthesizing functions of that subunit. This chain is Large ribosomal subunit protein bL20, found in Pelobacter propionicus (strain DSM 2379 / NBRC 103807 / OttBd1).